A 138-amino-acid chain; its full sequence is Ribosome-binding factor A (138 aa).

Positions 119–138 (RSPEVQRDLGPSNEKDDEQN) are disordered.

This sequence belongs to the RbfA family. In terms of assembly, monomer. Binds 30S ribosomal subunits, but not 50S ribosomal subunits or 70S ribosomes.

It is found in the cytoplasm. In terms of biological role, one of several proteins that assist in the late maturation steps of the functional core of the 30S ribosomal subunit. Associates with free 30S ribosomal subunits (but not with 30S subunits that are part of 70S ribosomes or polysomes). Required for efficient processing of 16S rRNA. May interact with the 5'-terminal helix region of 16S rRNA. This Agrobacterium fabrum (strain C58 / ATCC 33970) (Agrobacterium tumefaciens (strain C58)) protein is Ribosome-binding factor A.